A 438-amino-acid polypeptide reads, in one-letter code: tRNA(Ile)-lysidine synthase (438 aa).

Position 27 to 32 (27 to 32 (SGGVDS)) interacts with ATP.

The protein belongs to the tRNA(Ile)-lysidine synthase family.

It localises to the cytoplasm. It catalyses the reaction cytidine(34) in tRNA(Ile2) + L-lysine + ATP = lysidine(34) in tRNA(Ile2) + AMP + diphosphate + H(+). Ligates lysine onto the cytidine present at position 34 of the AUA codon-specific tRNA(Ile) that contains the anticodon CAU, in an ATP-dependent manner. Cytidine is converted to lysidine, thus changing the amino acid specificity of the tRNA from methionine to isoleucine. The sequence is that of tRNA(Ile)-lysidine synthase from Vibrio parahaemolyticus serotype O3:K6 (strain RIMD 2210633).